A 360-amino-acid polypeptide reads, in one-letter code: C-C chemokine receptor-like 2 (360 aa).

Residues 1–42 (MDNYTVAPDDEYDVLILDDYLDNSGPDQVPAPEFLSPQQVLQ) lie on the Extracellular side of the membrane. An N-linked (GlcNAc...) asparagine glycan is attached at Asn3. A helical transmembrane segment spans residues 43 to 63 (FCCAVFAVGLLDNVLAVFILV). Residues 64–73 (KYKGLKNLGN) are Cytoplasmic-facing. The chain crosses the membrane as a helical span at residues 74 to 94 (IYFLNLALSNLCFLLPLPFWA). Topologically, residues 95-109 (HTAAHGESPGNGTCK) are extracellular. An N-linked (GlcNAc...) asparagine glycan is attached at Asn105. A disulfide bond links Cys108 and Cys185. The chain crosses the membrane as a helical span at residues 110-130 (VLVGLHSSGLYSEVFSNILLL). The Cytoplasmic segment spans residues 131–141 (VQGYRVFSQGR). Residues 142 to 162 (LASIFTTVSCGIVACILAWAM) form a helical membrane-spanning segment. Topologically, residues 163–202 (ATALSLPESVFYEPRMERQKHKCAFGKPHFLPIEAPLWKY) are extracellular. A helical membrane pass occupies residues 203–223 (VLTSKMIILVLAFPLLVFIIC). Residues 224-243 (CRQLRRRQSFRERQYDLHKP) are Cytoplasmic-facing. The chain crosses the membrane as a helical span at residues 244–264 (ALVITGVFLLMWAPYNTVLFL). At 265-285 (SAFQEHLSLQDEKSSYHLDAS) the chain is on the extracellular side. The chain crosses the membrane as a helical span at residues 286–307 (VQVTQLVATTHCCVNPLLYLLL). Residues 308–360 (DRKAFMRYLRSLFPRCNDIPYQSSGGYQQAPPREGHGRPIELYSNLHQRQDII) lie on the Cytoplasmic side of the membrane.

It belongs to the G-protein coupled receptor 1 family. In terms of tissue distribution, expressed in macrophages, astrocytes, in glial cells. Constitutively expressed by mast cells. Detected in bronchial epithelium in OVA-induced airway inflammation. Up-regulated during dendritic cell (DC) maturation.

Its subcellular location is the cell membrane. In terms of biological role, receptor for CCL19 and chemerin/RARRES2. Does not appear to be a signaling receptor, but may have a role in modulating chemokine-triggered immune responses by capturing and internalizing CCL19 or by presenting RARRES2 ligand to CMKLR1, a functional signaling receptor. Plays a critical role for the development of Th2 responses. The protein is C-C chemokine receptor-like 2 (Ccrl2) of Mus musculus (Mouse).